A 388-amino-acid chain; its full sequence is Galactokinase (388 aa).

33–36 (EHTD) contributes to the substrate binding site. ATP contacts are provided by residues Ser-67 and 124-130 (GAGLSSS). Residues Ser-130 and Glu-162 each coordinate Mg(2+). Asp-174 (proton acceptor) is an active-site residue. Tyr-224 lines the substrate pocket.

It belongs to the GHMP kinase family. GalK subfamily.

The protein localises to the cytoplasm. It carries out the reaction alpha-D-galactose + ATP = alpha-D-galactose 1-phosphate + ADP + H(+). Its pathway is carbohydrate metabolism; galactose metabolism. Catalyzes the transfer of the gamma-phosphate of ATP to D-galactose to form alpha-D-galactose-1-phosphate (Gal-1-P). The protein is Galactokinase of Lacticaseibacillus casei (strain BL23) (Lactobacillus casei).